The chain runs to 174 residues: Protein COFACTOR ASSEMBLY OF COMPLEX C SUBUNIT B CCB3, chloroplastic (174 aa).

A chloroplast-targeting transit peptide spans 1-39 (MTTVTTSFVSFSPALMIFQKKSRRSSPNFRNRSTSLPIV). Topologically, residues 40-78 (SATLSHIEEAATTTNLIRQTNSISESLRNISLADLDPGT) are lumenal. The helical transmembrane segment at 79–99 (AKLAIGILGPALSAFGFLFIL) threads the bilayer. The Stromal portion of the chain corresponds to 100–147 (RIVMSWYPKLPVDKFPYVLAYAPTEPILVQTRKVIPPLAGVDVTPVVW). The chain crosses the membrane as a helical span at residues 148 to 168 (FGLVSFLSEILVGPQGLLVLV). Residues 169-174 (SQQQVN) are Lumenal-facing.

This sequence belongs to the YggT family.

It localises to the plastid. Its subcellular location is the chloroplast thylakoid membrane. Its function is as follows. Required for the biogenesis and accumulation of native cytochrome b6 in the thylakoid membrane. Controls the conversion of apocytochrome b6 to holocytochrome b6. Required for covalent binding of the c-type heme to cytochrome b6. The polypeptide is Protein COFACTOR ASSEMBLY OF COMPLEX C SUBUNIT B CCB3, chloroplastic (Arabidopsis thaliana (Mouse-ear cress)).